Here is a 453-residue protein sequence, read N- to C-terminus: Bifunctional protein GlmU (453 aa).

The tract at residues 1-231 (MERTCLAVIL…EIEMTGCNTR (231 aa)) is pyrophosphorylase. UDP-N-acetyl-alpha-D-glucosamine is bound by residues 10–13 (LAAG), K24, Q77, 82–83 (GT), 105–107 (YGD), G143, E157, N172, and N229. Residue D107 participates in Mg(2+) binding. Residue N229 participates in Mg(2+) binding. Residues 232–252 (AELAVIERFWQERRRHQMMLS) form a linker region. The N-acetyltransferase stretch occupies residues 253-453 (GVTMIAPETV…AIKAAKKAKA (201 aa)). UDP-N-acetyl-alpha-D-glucosamine-binding residues include R318 and K336. The active-site Proton acceptor is H348. Residues Y351 and N362 each contribute to the UDP-N-acetyl-alpha-D-glucosamine site. Acetyl-CoA-binding positions include A365, 371–372 (NY), S390, S408, and R425.

It in the N-terminal section; belongs to the N-acetylglucosamine-1-phosphate uridyltransferase family. This sequence in the C-terminal section; belongs to the transferase hexapeptide repeat family. In terms of assembly, homotrimer. Mg(2+) is required as a cofactor.

It is found in the cytoplasm. It carries out the reaction alpha-D-glucosamine 1-phosphate + acetyl-CoA = N-acetyl-alpha-D-glucosamine 1-phosphate + CoA + H(+). It catalyses the reaction N-acetyl-alpha-D-glucosamine 1-phosphate + UTP + H(+) = UDP-N-acetyl-alpha-D-glucosamine + diphosphate. The protein operates within nucleotide-sugar biosynthesis; UDP-N-acetyl-alpha-D-glucosamine biosynthesis; N-acetyl-alpha-D-glucosamine 1-phosphate from alpha-D-glucosamine 6-phosphate (route II): step 2/2. It functions in the pathway nucleotide-sugar biosynthesis; UDP-N-acetyl-alpha-D-glucosamine biosynthesis; UDP-N-acetyl-alpha-D-glucosamine from N-acetyl-alpha-D-glucosamine 1-phosphate: step 1/1. It participates in bacterial outer membrane biogenesis; LPS lipid A biosynthesis. Its function is as follows. Catalyzes the last two sequential reactions in the de novo biosynthetic pathway for UDP-N-acetylglucosamine (UDP-GlcNAc). The C-terminal domain catalyzes the transfer of acetyl group from acetyl coenzyme A to glucosamine-1-phosphate (GlcN-1-P) to produce N-acetylglucosamine-1-phosphate (GlcNAc-1-P), which is converted into UDP-GlcNAc by the transfer of uridine 5-monophosphate (from uridine 5-triphosphate), a reaction catalyzed by the N-terminal domain. This chain is Bifunctional protein GlmU, found in Rhizobium johnstonii (strain DSM 114642 / LMG 32736 / 3841) (Rhizobium leguminosarum bv. viciae).